The sequence spans 88 residues: MSLLSFLLGEKKKTASVAKERLQIILAHERSGRGGSRPDYLEALQRELVAVISKYVSIKPEDIKVHLQKQDNLEVLEVKLELPEAARG.

The protein belongs to the MinE family.

Its function is as follows. Prevents the cell division inhibition by proteins MinC and MinD at internal division sites while permitting inhibition at polar sites. This ensures cell division at the proper site by restricting the formation of a division septum at the midpoint of the long axis of the cell. This chain is Cell division topological specificity factor, found in Methylibium petroleiphilum (strain ATCC BAA-1232 / LMG 22953 / PM1).